We begin with the raw amino-acid sequence, 489 residues long: Homoserine O-acetyltransferase (489 aa).

Residues leucine 69–glutamate 438 enclose the AB hydrolase-1 domain. The active-site Nucleophile is the serine 163. The tract at residues alanine 255–glutamine 329 is disordered. Positions glutamate 280–cysteine 290 are enriched in basic and acidic residues. Residues serine 299–glutamine 329 show a composition bias toward low complexity. Catalysis depends on residues aspartate 403 and histidine 432.

The protein belongs to the AB hydrolase superfamily. MetX family.

It is found in the cytoplasm. The enzyme catalyses L-homoserine + acetyl-CoA = O-acetyl-L-homoserine + CoA. Its pathway is amino-acid biosynthesis; L-methionine biosynthesis via de novo pathway; O-acetyl-L-homoserine from L-homoserine: step 1/1. Its function is as follows. Commits homoserine to the methionine biosynthesis pathway by catalyzing its O-acetylation. The chain is Homoserine O-acetyltransferase (met6) from Schizosaccharomyces pombe (strain 972 / ATCC 24843) (Fission yeast).